Here is a 343-residue protein sequence, read N- to C-terminus: Fanconi anemia group F protein (343 aa).

In terms of assembly, belongs to the multisubunit FA complex composed of FANCA, FANCB, FANCC, FANCE, FANCF, FANCG, FANCL/PHF9 and FANCM. In complex with FANCA, FANCG and FANCL, but not with FANCC, nor FANCE, interacts with HES1; this interaction may be essential for the stability and nuclear localization of FA core complex proteins.

It localises to the nucleus. Functionally, DNA repair protein that may operate in a postreplication repair or a cell cycle checkpoint function. May be implicated in interstrand DNA cross-link repair and in the maintenance of normal chromosome stability. The chain is Fanconi anemia group F protein from Mus musculus (Mouse).